The following is a 303-amino-acid chain: Eukaryotic translation initiation factor 3 subunit G (303 aa).

Residues 1–38 are disordered; that stretch reads MATQTKHDWADDEDLEETTTTTAPTTDLPPPQKIQNKD. The region spanning 223-301 is the RRM domain; that stretch reads ATLRVTNVSE…LILRVEFAKK (79 aa).

Belongs to the eIF-3 subunit G family. Component of the eukaryotic translation initiation factor 3 (eIF-3) complex.

Its subcellular location is the cytoplasm. Functionally, RNA-binding component of the eukaryotic translation initiation factor 3 (eIF-3) complex, which is involved in protein synthesis of a specialized repertoire of mRNAs and, together with other initiation factors, stimulates binding of mRNA and methionyl-tRNAi to the 40S ribosome. The eIF-3 complex specifically targets and initiates translation of a subset of mRNAs involved in cell proliferation. This subunit can bind 18S rRNA. The protein is Eukaryotic translation initiation factor 3 subunit G of Chaetomium globosum (strain ATCC 6205 / CBS 148.51 / DSM 1962 / NBRC 6347 / NRRL 1970) (Soil fungus).